The primary structure comprises 444 residues: F-box protein At1g53790 (444 aa).

Positions 76 to 125 (VSCFRYIPIDLLMDIFSRVPAKSIARFRCVSKLWESILCRPDFKELFMTM) constitute an F-box domain.

The chain is F-box protein At1g53790 from Arabidopsis thaliana (Mouse-ear cress).